The primary structure comprises 199 residues: Holliday junction branch migration complex subunit RuvA (199 aa).

The interval 1-64 (MFAYIKGTVE…EDIAVLYGFG (64 aa)) is domain I. The domain II stretch occupies residues 65–143 (TVEELTMFEM…KEQLTSSIPM (79 aa)). The tract at residues 144 to 151 (TSPENNEV) is flexible linker. Positions 152 to 199 (TGDSVLSEAVSALMVLGYGSAEASSTISGIYEKGISVEELVKKALKSL) are domain III.

It belongs to the RuvA family. Homotetramer. Forms an RuvA(8)-RuvB(12)-Holliday junction (HJ) complex. HJ DNA is sandwiched between 2 RuvA tetramers; dsDNA enters through RuvA and exits via RuvB. An RuvB hexamer assembles on each DNA strand where it exits the tetramer. Each RuvB hexamer is contacted by two RuvA subunits (via domain III) on 2 adjacent RuvB subunits; this complex drives branch migration. In the full resolvosome a probable DNA-RuvA(4)-RuvB(12)-RuvC(2) complex forms which resolves the HJ.

Its subcellular location is the cytoplasm. In terms of biological role, the RuvA-RuvB-RuvC complex processes Holliday junction (HJ) DNA during genetic recombination and DNA repair, while the RuvA-RuvB complex plays an important role in the rescue of blocked DNA replication forks via replication fork reversal (RFR). RuvA specifically binds to HJ cruciform DNA, conferring on it an open structure. The RuvB hexamer acts as an ATP-dependent pump, pulling dsDNA into and through the RuvAB complex. HJ branch migration allows RuvC to scan DNA until it finds its consensus sequence, where it cleaves and resolves the cruciform DNA. The polypeptide is Holliday junction branch migration complex subunit RuvA (Ruminiclostridium cellulolyticum (strain ATCC 35319 / DSM 5812 / JCM 6584 / H10) (Clostridium cellulolyticum)).